The following is an 89-amino-acid chain: Phosphocarrier protein HPr (89 aa).

Residues Met1–Asp88 enclose the HPr domain. His15 (pros-phosphohistidine intermediate) is an active-site residue. Ser46 is subject to Phosphoserine; by HPrK/P.

The protein belongs to the HPr family.

It is found in the cytoplasm. Phosphorylation on Ser-46 inhibits the phosphoryl transfer from enzyme I to HPr. Its function is as follows. General (non sugar-specific) component of the phosphoenolpyruvate-dependent sugar phosphotransferase system (sugar PTS). This major carbohydrate active-transport system catalyzes the phosphorylation of incoming sugar substrates concomitantly with their translocation across the cell membrane. The phosphoryl group from phosphoenolpyruvate (PEP) is transferred to the phosphoryl carrier protein HPr by enzyme I. Phospho-HPr then transfers it to the PTS EIIA domain. The sequence is that of Phosphocarrier protein HPr (ptsH) from Xylella fastidiosa (strain 9a5c).